The following is a 391-amino-acid chain: 8-amino-7-oxononanoate synthase (391 aa).

Substrate is bound at residue arginine 19. Residue 106 to 107 (GY) participates in pyridoxal 5'-phosphate binding. Residue histidine 131 coordinates substrate. The pyridoxal 5'-phosphate site is built by serine 178, histidine 206, and threonine 234. Lysine 237 carries the N6-(pyridoxal phosphate)lysine modification. Residue threonine 353 participates in substrate binding.

It belongs to the class-II pyridoxal-phosphate-dependent aminotransferase family. BioF subfamily. As to quaternary structure, homodimer. Requires pyridoxal 5'-phosphate as cofactor.

The catalysed reaction is 6-carboxyhexanoyl-[ACP] + L-alanine + H(+) = (8S)-8-amino-7-oxononanoate + holo-[ACP] + CO2. Its pathway is cofactor biosynthesis; biotin biosynthesis. Its function is as follows. Catalyzes the decarboxylative condensation of pimeloyl-[acyl-carrier protein] and L-alanine to produce 8-amino-7-oxononanoate (AON), [acyl-carrier protein], and carbon dioxide. The chain is 8-amino-7-oxononanoate synthase from Geobacter sulfurreducens (strain ATCC 51573 / DSM 12127 / PCA).